The sequence spans 90 residues: MAHKKAGGSSRNGRDSQAKRLGTKVYGGELIPAGSIIIRQRGTRFHAGENVGMGKDHTLFAKVDGYVKFVVKGALKRKTVIVEQYTGEAA.

The disordered stretch occupies residues 1–21 (MAHKKAGGSSRNGRDSQAKRL).

It belongs to the bacterial ribosomal protein bL27 family.

The sequence is that of Large ribosomal subunit protein bL27 from Laribacter hongkongensis (strain HLHK9).